A 127-amino-acid polypeptide reads, in one-letter code: PanD regulatory factor (127 aa).

The N-acetyltransferase domain maps to Met-1 to Arg-127. CoA-binding positions include Leu-66 to Val-68 and Thr-72 to Gln-79.

Belongs to the PanZ/PanM family. Interacts with PanD in the presence of CoA. Monomer.

Its function is as follows. Controls both the activation and catalytic activity of PanD in a coenzyme A (CoA)-dependent fashion. Binding of CoA or a derivative to PanM leads to interaction with PanD, which promotes the processing and activation of pro-PanD, and subsequent substrate-mediated inhibition of the active form of PanD. Lacks acetyltransferase activity. In Salmonella typhimurium (strain LT2 / SGSC1412 / ATCC 700720), this protein is PanD regulatory factor.